Reading from the N-terminus, the 503-residue chain is Cytochrome P450 3A14 (503 aa).

Cysteine 442 serves as a coordination point for heme.

The protein belongs to the cytochrome P450 family. Heme is required as a cofactor.

It localises to the endoplasmic reticulum membrane. Its subcellular location is the microsome membrane. It catalyses the reaction an organic molecule + reduced [NADPH--hemoprotein reductase] + O2 = an alcohol + oxidized [NADPH--hemoprotein reductase] + H2O + H(+). Its function is as follows. Cytochromes P450 are a group of heme-thiolate monooxygenases. In liver microsomes, this enzyme is involved in an NADPH-dependent electron transport pathway. It oxidizes a variety of structurally unrelated compounds, including steroids, fatty acids, and xenobiotics. This is Cytochrome P450 3A14 (CYP3A14) from Cavia porcellus (Guinea pig).